A 485-amino-acid polypeptide reads, in one-letter code: D-alanine--D-alanyl carrier protein ligase (485 aa).

144 to 145 contributes to the ATP binding site; sequence TS. Position 189 (D189) interacts with D-alanine. ATP is bound at residue 284 to 289; that stretch reads NTYGPT. V293 is a D-alanine binding site. Residues D365 and K473 each contribute to the ATP site. A D-alanine-binding site is contributed by K473.

This sequence belongs to the ATP-dependent AMP-binding enzyme family. DltA subfamily.

It is found in the cytoplasm. The enzyme catalyses holo-[D-alanyl-carrier protein] + D-alanine + ATP = D-alanyl-[D-alanyl-carrier protein] + AMP + diphosphate. The protein operates within cell wall biogenesis; lipoteichoic acid biosynthesis. Catalyzes the first step in the D-alanylation of lipoteichoic acid (LTA), the activation of D-alanine and its transfer onto the D-alanyl carrier protein (Dcp) DltC. In an ATP-dependent two-step reaction, forms a high energy D-alanyl-AMP intermediate, followed by transfer of the D-alanyl residue as a thiol ester to the phosphopantheinyl prosthetic group of the Dcp. D-alanylation of LTA plays an important role in modulating the properties of the cell wall in Gram-positive bacteria, influencing the net charge of the cell wall. This chain is D-alanine--D-alanyl carrier protein ligase, found in Staphylococcus aureus (strain bovine RF122 / ET3-1).